Here is a 141-residue protein sequence, read N- to C-terminus: MQLTNFTDFGLRALIYLGSLPEGELTSITVVTETFDVSRNHMVKIINKLGQEGYVKTIRGKNGGICLGKPADQIIIGDVIRAIEPLQVVNCAPEFCHITPACRLKGALAKAKQAFLDELDKHTIQDMLTDNSELLILLKRI.

Residues 2-129 enclose the HTH rrf2-type domain; the sequence is QLTNFTDFGL…DKHTIQDMLT (128 aa). Positions 28–51 form a DNA-binding region, H-T-H motif; it reads ITVVTETFDVSRNHMVKIINKLGQ. Positions 91, 96, and 102 each coordinate [2Fe-2S] cluster.

[2Fe-2S] cluster is required as a cofactor.

Nitric oxide-sensitive repressor of genes involved in protecting the cell against nitrosative stress. May require iron for activity. This is HTH-type transcriptional repressor NsrR from Aliivibrio fischeri (strain ATCC 700601 / ES114) (Vibrio fischeri).